Consider the following 125-residue polypeptide: Large ribosomal subunit protein bL12 (125 aa).

The protein belongs to the bacterial ribosomal protein bL12 family. In terms of assembly, homodimer. Part of the ribosomal stalk of the 50S ribosomal subunit. Forms a multimeric L10(L12)X complex, where L10 forms an elongated spine to which 2 to 4 L12 dimers bind in a sequential fashion. Binds GTP-bound translation factors.

Forms part of the ribosomal stalk which helps the ribosome interact with GTP-bound translation factors. Is thus essential for accurate translation. This Polaromonas sp. (strain JS666 / ATCC BAA-500) protein is Large ribosomal subunit protein bL12.